The chain runs to 142 residues: Protein archease (142 aa).

2 residues coordinate Ca(2+): aspartate 12 and aspartate 141.

The protein belongs to the archease family.

Its function is as follows. Activates the tRNA-splicing ligase complex by facilitating the enzymatic turnover of catalytic subunit RtcB. Acts by promoting the guanylylation of RtcB, a key intermediate step in tRNA ligation. Can also alter the NTP specificity of RtcB such that ATP, dGTP or ITP is used efficiently. The polypeptide is Protein archease (Thermococcus kodakarensis (strain ATCC BAA-918 / JCM 12380 / KOD1) (Pyrococcus kodakaraensis (strain KOD1))).